The primary structure comprises 126 residues: Large ribosomal subunit protein uL22 (126 aa).

This sequence belongs to the universal ribosomal protein uL22 family. Part of the 50S ribosomal subunit.

This protein binds specifically to 23S rRNA; its binding is stimulated by other ribosomal proteins, e.g. L4, L17, and L20. It is important during the early stages of 50S assembly. It makes multiple contacts with different domains of the 23S rRNA in the assembled 50S subunit and ribosome. Functionally, the globular domain of the protein is located near the polypeptide exit tunnel on the outside of the subunit, while an extended beta-hairpin is found that lines the wall of the exit tunnel in the center of the 70S ribosome. The chain is Large ribosomal subunit protein uL22 from Dinoroseobacter shibae (strain DSM 16493 / NCIMB 14021 / DFL 12).